We begin with the raw amino-acid sequence, 385 residues long: 8-amino-7-oxononanoate synthase (385 aa).

A substrate-binding site is contributed by arginine 21. 108-109 is a binding site for pyridoxal 5'-phosphate; sequence GF. Histidine 133 is a binding site for substrate. Residues serine 179, histidine 207, and threonine 233 each contribute to the pyridoxal 5'-phosphate site. Lysine 236 is modified (N6-(pyridoxal phosphate)lysine). Threonine 352 contacts substrate.

This sequence belongs to the class-II pyridoxal-phosphate-dependent aminotransferase family. BioF subfamily. Homodimer. It depends on pyridoxal 5'-phosphate as a cofactor.

It carries out the reaction 6-carboxyhexanoyl-[ACP] + L-alanine + H(+) = (8S)-8-amino-7-oxononanoate + holo-[ACP] + CO2. It participates in cofactor biosynthesis; biotin biosynthesis. Catalyzes the decarboxylative condensation of pimeloyl-[acyl-carrier protein] and L-alanine to produce 8-amino-7-oxononanoate (AON), [acyl-carrier protein], and carbon dioxide. This is 8-amino-7-oxononanoate synthase from Salmonella schwarzengrund (strain CVM19633).